The sequence spans 312 residues: HTH-type transcriptional regulator TdcA (312 aa).

The HTH lysR-type domain maps to 7–64 (PKTQHLVVFQEVIRSGSIGSAAKELGLTQPAVSKIINDIEDYFGVELVVRKNTGVTLT). The segment at residues 24–43 (IGSAAKELGLTQPAVSKIIN) is a DNA-binding region (H-T-H motif).

The protein belongs to the LysR transcriptional regulatory family.

The protein operates within amino-acid degradation; L-threonine degradation via propanoate pathway [regulation]. In terms of biological role, transcriptional activator for the tdcABCDE operon. The protein is HTH-type transcriptional regulator TdcA (tdcA) of Escherichia coli O157:H7.